We begin with the raw amino-acid sequence, 350 residues long: Chorismate synthase (350 aa).

Arg-48 is an NADP(+) binding site. Residues 125–127 (RSS), Gly-277, 292–296 (KPIPS), and Arg-318 each bind FMN.

The protein belongs to the chorismate synthase family. In terms of assembly, homotetramer. It depends on FMNH2 as a cofactor.

The enzyme catalyses 5-O-(1-carboxyvinyl)-3-phosphoshikimate = chorismate + phosphate. Its pathway is metabolic intermediate biosynthesis; chorismate biosynthesis; chorismate from D-erythrose 4-phosphate and phosphoenolpyruvate: step 7/7. Catalyzes the anti-1,4-elimination of the C-3 phosphate and the C-6 proR hydrogen from 5-enolpyruvylshikimate-3-phosphate (EPSP) to yield chorismate, which is the branch point compound that serves as the starting substrate for the three terminal pathways of aromatic amino acid biosynthesis. This reaction introduces a second double bond into the aromatic ring system. This Maridesulfovibrio salexigens (strain ATCC 14822 / DSM 2638 / NCIMB 8403 / VKM B-1763) (Desulfovibrio salexigens) protein is Chorismate synthase.